We begin with the raw amino-acid sequence, 312 residues long: Taste receptor type 2 member 7 (312 aa).

Residues 1 to 9 (MTYETDTTL) lie on the Extracellular side of the membrane. Residues 10–30 (MFVAVCEALVGILGNAFIALV) traverse the membrane as a helical segment. At 31–49 (NFMGWMKNRKITAIDLILS) the chain is on the cytoplasmic side. Residues 50-70 (SLAMSRICLQCIILLDCIILV) traverse the membrane as a helical segment. The Extracellular segment spans residues 71-101 (QYPDTYNRGKEMRIIDFFWTLTNHLSVWFAT). A helical membrane pass occupies residues 102 to 122 (CLSIFYFFKIANFFHPLFLWI). At 123-128 (KWRIDK) the chain is on the cytoplasmic side. A helical membrane pass occupies residues 129–149 (LILRTLLACLILSLCFSLPVT). The Extracellular portion of the chain corresponds to 150 to 187 (ENLTDDFRRCVKTKERINSTLRCKLNKAGYASVKVNLN). Asn-151 and Asn-167 each carry an N-linked (GlcNAc...) asparagine glycan. Residues 188–208 (LVMLFPFSVSLVSFLLLILSL) form a helical membrane-spanning segment. The Cytoplasmic portion of the chain corresponds to 209-235 (WRHTRQMQLNVTGYNDPSTTAHVKATK). Residues 236-256 (AVISFLVLFIVYCLAFLIATS) form a helical membrane-spanning segment. The Extracellular portion of the chain corresponds to 257–266 (SYFMPESELA). A helical membrane pass occupies residues 267–287 (VIWGELIALIYPSSHSFILIL). At 288 to 312 (GNSKLKQASVRVLCRVKTMLKGRKY) the chain is on the cytoplasmic side.

Belongs to the G-protein coupled receptor T2R family. In terms of tissue distribution, expressed in subsets of taste receptor cells of the tongue and palate epithelium and exclusively in gustducin-positive cells. Expressed in 15% taste bud cells in circumvallate and foliate papillae but only in 2% in fungiform papillae. Expressed in the duodenum, antrum and fundus (part of the stomach) and in gastric endocrine cells.

Its subcellular location is the membrane. Functionally, gustducin-coupled receptor implicated in the perception of bitter compounds in the oral cavity and the gastrointestinal tract. Signals through PLCB2 and the calcium-regulated cation channel TRPM5. The protein is Taste receptor type 2 member 7 (Tas2r7) of Rattus norvegicus (Rat).